A 183-amino-acid chain; its full sequence is Capsid protein (183 aa).

The interval 136–183 (NAPILSTLPETTVVRRRGRSPRRRTPSPRRRRSQSPRRRRSQSRESQC) is disordered. Residues 149–176 (VRRRGRSPRRRTPSPRRRRSQSPRRRRS) are compositionally biased toward basic residues. Phosphoserine; by host occurs at positions 155, 162, and 170. Residues 155-161 (SPRRRTP) form a 1; half-length repeat. A 3 X 8 AA repeats of S-P-R-R-R-[PR]-S-Q region spans residues 155-177 (SPRRRTPSPRRRRSQSPRRRRSQ). Positions 158–175 (RRTPSPRRRRSQSPRRRR) match the Bipartite nuclear localization signal motif. 2 consecutive repeat copies span residues 162-169 (SPRRRRSQ) and 170-177 (SPRRRRSQ). The RNA binding stretch occupies residues 177–183 (QSRESQC).

The protein belongs to the orthohepadnavirus core antigen family. In terms of assembly, homodimerizes, then multimerizes. Interacts with cytosol exposed regions of viral L glycoprotein present in the reticulum-to-Golgi compartment. Interacts with human FLNB. Phosphorylated form interacts with host importin alpha; this interaction depends on the exposure of the NLS, which itself depends upon genome maturation and/or phosphorylation of the capsid protein. Interacts with host NUP153. In terms of processing, phosphorylated by host SRPK1, SRPK2, and maybe protein kinase C or GAPDH. Phosphorylation is critical for pregenomic RNA packaging. Protein kinase C phosphorylation is stimulated by HBx protein and may play a role in transport of the viral genome to the nucleus at the late step during the viral replication cycle.

The protein localises to the virion. The protein resides in the host cytoplasm. Self assembles to form an icosahedral capsid. Most capsids appear to be large particles with an icosahedral symmetry of T=4 and consist of 240 copies of capsid protein, though a fraction forms smaller T=3 particles consisting of 180 capsid proteins. Entering capsids are transported along microtubules to the nucleus. Phosphorylation of the capsid is thought to induce exposure of nuclear localization signal in the C-terminal portion of the capsid protein that allows binding to the nuclear pore complex via the importin (karyopherin-) alpha and beta. Capsids are imported in intact form through the nuclear pore into the nuclear basket, where it probably binds NUP153. Only capsids that contain the mature viral genome can release the viral DNA and capsid protein into the nucleoplasm. Immature capsids get stuck in the basket. Capsids encapsulate the pre-genomic RNA and the P protein. Pre-genomic RNA is reverse-transcribed into DNA while the capsid is still in the cytoplasm. The capsid can then either be directed to the nucleus, providing more genomes for transcription, or bud through the endoplasmic reticulum to provide new virions. In Homo sapiens (Human), this protein is Capsid protein.